Reading from the N-terminus, the 152-residue chain is Nucleoplasmin-like protein (152 aa).

Residues 109 to 128 are compositionally biased toward acidic residues; that stretch reads EVVDMEEDDEEDDVAEDEED. The disordered stretch occupies residues 109 to 152; it reads EVVDMEEDDEEDDVAEDEEDEHPKKRAKIENAADGKNAKNNKKK. A compositionally biased stretch (basic and acidic residues) spans 136 to 145; it reads KIENAADGKN.

It belongs to the nucleoplasmin family. In terms of assembly, decamer formed by two pentameric rings associated in a head-to-head fashion.

The protein resides in the nucleus. In terms of biological role, binds to core histones and functions in the ATP-facilitated assembly of approximately regularly spaced nucleosomal arrays. May participate in parallel with other histone-binding proteins such as NAP-1. Functionally, inactive for chromatin assembly. In vitro it appears to form a high molecular mass aggregate with the core histones. The sequence is that of Nucleoplasmin-like protein (Nlp) from Drosophila melanogaster (Fruit fly).